Here is a 307-residue protein sequence, read N- to C-terminus: Acetaldehyde dehydrogenase 2 (307 aa).

C131 serves as the catalytic Acyl-thioester intermediate. Residues 162–170 (SVGPGTRKN) and N273 contribute to the NAD(+) site.

The protein belongs to the acetaldehyde dehydrogenase family.

The enzyme catalyses acetaldehyde + NAD(+) + CoA = acetyl-CoA + NADH + H(+). This is Acetaldehyde dehydrogenase 2 (aphF) from Comamonas testosteroni (Pseudomonas testosteroni).